A 212-amino-acid chain; its full sequence is TATA-box-binding protein 2 (212 aa).

Repeat copies occupy residues 30–114 and 120–201.

This sequence belongs to the TBP family. In terms of assembly, belongs to the TFIID complex together with the TBP-associated factors (TAFs). Binds DNA as monomer.

Its subcellular location is the nucleus. In terms of biological role, general transcription factor that functions at the core of the DNA-binding multiprotein factor TFIID. Binding of TFIID to the TATA box is the initial transcriptional step of the pre-initiation complex (PIC), playing a role in the activation of eukaryotic genes transcribed by RNA polymerase II. This Entamoeba histolytica (strain ATCC 30459 / HM-1:IMSS / ABRM) protein is TATA-box-binding protein 2.